The following is a 64-amino-acid chain: MKLTCVMIVAVLVLTVCKVVTSDQLKKLRRECYLEPGDSCFHDDGRGACCEGTCLFGINCVASW.

The first 22 residues, 1 to 22, serve as a signal peptide directing secretion; that stretch reads MKLTCVMIVAVLVLTVCKVVTS. 3 disulfides stabilise this stretch: cysteine 32–cysteine 50, cysteine 40–cysteine 54, and cysteine 49–cysteine 60.

Expressed by the venom duct.

The protein resides in the secreted. Its function is as follows. Probable neurotoxin. The sequence is that of Conotoxin Cal6.26 from Californiconus californicus (California cone).